A 214-amino-acid chain; its full sequence is uncharacterized protein (214 aa).

5 helical membrane-spanning segments follow: residues 33-53, 104-124, 132-152, 153-173, and 186-206; these read VILFVSLVFILSLVLLYILVV, ILGIFSLFVIAVNSYILSYVL, FIYLVLPHGIIEIPALILSAS, GGVLFNMGLVNFLINIKFGTK, and LLILSIILFIVAGIVEGTITF.

Its subcellular location is the cell membrane. This is an uncharacterized protein from Methanocaldococcus jannaschii (strain ATCC 43067 / DSM 2661 / JAL-1 / JCM 10045 / NBRC 100440) (Methanococcus jannaschii).